The following is a 483-amino-acid chain: Glutamate--tRNA ligase (483 aa).

The 'HIGH' region signature appears at 11 to 21 (PSPTGLLHIGN). Residues 255–259 (KLSKR) carry the 'KMSKS' region motif. Residue Lys-258 coordinates ATP.

It belongs to the class-I aminoacyl-tRNA synthetase family. Glutamate--tRNA ligase type 1 subfamily. In terms of assembly, monomer.

Its subcellular location is the cytoplasm. It catalyses the reaction tRNA(Glu) + L-glutamate + ATP = L-glutamyl-tRNA(Glu) + AMP + diphosphate. In terms of biological role, catalyzes the attachment of glutamate to tRNA(Glu) in a two-step reaction: glutamate is first activated by ATP to form Glu-AMP and then transferred to the acceptor end of tRNA(Glu). The sequence is that of Glutamate--tRNA ligase from Lactococcus lactis subsp. cremoris (strain MG1363).